Reading from the N-terminus, the 391-residue chain is Putative glutamate--cysteine ligase 2-2 (391 aa).

This sequence belongs to the glutamate--cysteine ligase type 2 family. YbdK subfamily.

It catalyses the reaction L-cysteine + L-glutamate + ATP = gamma-L-glutamyl-L-cysteine + ADP + phosphate + H(+). In terms of biological role, ATP-dependent carboxylate-amine ligase which exhibits weak glutamate--cysteine ligase activity. The chain is Putative glutamate--cysteine ligase 2-2 from Saccharopolyspora erythraea (strain ATCC 11635 / DSM 40517 / JCM 4748 / NBRC 13426 / NCIMB 8594 / NRRL 2338).